Reading from the N-terminus, the 269-residue chain is Putative pyruvate, phosphate dikinase regulatory protein (269 aa).

151–158 lines the ADP pocket; sequence GVSRSSKT.

It belongs to the pyruvate, phosphate/water dikinase regulatory protein family. PDRP subfamily.

It carries out the reaction N(tele)-phospho-L-histidyl/L-threonyl-[pyruvate, phosphate dikinase] + ADP = N(tele)-phospho-L-histidyl/O-phospho-L-threonyl-[pyruvate, phosphate dikinase] + AMP + H(+). The enzyme catalyses N(tele)-phospho-L-histidyl/O-phospho-L-threonyl-[pyruvate, phosphate dikinase] + phosphate + H(+) = N(tele)-phospho-L-histidyl/L-threonyl-[pyruvate, phosphate dikinase] + diphosphate. Its function is as follows. Bifunctional serine/threonine kinase and phosphorylase involved in the regulation of the pyruvate, phosphate dikinase (PPDK) by catalyzing its phosphorylation/dephosphorylation. This chain is Putative pyruvate, phosphate dikinase regulatory protein, found in Geobacter sulfurreducens (strain ATCC 51573 / DSM 12127 / PCA).